The primary structure comprises 452 residues: tRNA modification GTPase MnmE (452 aa).

(6S)-5-formyl-5,6,7,8-tetrahydrofolate is bound by residues arginine 23, glutamate 80, and lysine 119. The 160-residue stretch at 215–374 (GIWIALVGQP…LQQGLLEMIG (160 aa)) folds into the TrmE-type G domain. Asparagine 225 is a K(+) binding site. GTP contacts are provided by residues 225–230 (NVGKSS), 244–250 (TEVPGTT), and 269–272 (DTAG). Serine 229 lines the Mg(2+) pocket. Residues threonine 244, valine 246, and threonine 249 each coordinate K(+). Threonine 250 lines the Mg(2+) pocket. (6S)-5-formyl-5,6,7,8-tetrahydrofolate is bound at residue lysine 452.

The protein belongs to the TRAFAC class TrmE-Era-EngA-EngB-Septin-like GTPase superfamily. TrmE GTPase family. As to quaternary structure, homodimer. Heterotetramer of two MnmE and two MnmG subunits. It depends on K(+) as a cofactor.

The protein localises to the cytoplasm. Exhibits a very high intrinsic GTPase hydrolysis rate. Involved in the addition of a carboxymethylaminomethyl (cmnm) group at the wobble position (U34) of certain tRNAs, forming tRNA-cmnm(5)s(2)U34. The polypeptide is tRNA modification GTPase MnmE (Nitrosospira multiformis (strain ATCC 25196 / NCIMB 11849 / C 71)).